We begin with the raw amino-acid sequence, 60 residues long: Large ribosomal subunit protein bL32 (60 aa).

A disordered region spans residues 1-28 (MAVQQNKKSRSARDMRRSHDALEASTLS). Residues 11 to 22 (SARDMRRSHDAL) are compositionally biased toward basic and acidic residues.

It belongs to the bacterial ribosomal protein bL32 family.

The sequence is that of Large ribosomal subunit protein bL32 from Pseudomonas savastanoi pv. phaseolicola (strain 1448A / Race 6) (Pseudomonas syringae pv. phaseolicola (strain 1448A / Race 6)).